Here is a 119-residue protein sequence, read N- to C-terminus: MEAKAIARHVRVTPRKARRMVDLIRGKKATEAITILKFAPQDASLPVRKVLESAIANARVKADKAGEPFRENDLVVKETYVDEGVTLKRFRARAQGRAARINKRTSHITVVVANKEGNR.

Belongs to the universal ribosomal protein uL22 family. Part of the 50S ribosomal subunit.

Functionally, this protein binds specifically to 23S rRNA; its binding is stimulated by other ribosomal proteins, e.g. L4, L17, and L20. It is important during the early stages of 50S assembly. It makes multiple contacts with different domains of the 23S rRNA in the assembled 50S subunit and ribosome. In terms of biological role, the globular domain of the protein is located near the polypeptide exit tunnel on the outside of the subunit, while an extended beta-hairpin is found that lines the wall of the exit tunnel in the center of the 70S ribosome. The polypeptide is Large ribosomal subunit protein uL22 (Bifidobacterium adolescentis (strain ATCC 15703 / DSM 20083 / NCTC 11814 / E194a)).